Here is a 333-residue protein sequence, read N- to C-terminus: Phosphate acyltransferase (333 aa).

The protein belongs to the PlsX family. Homodimer. Probably interacts with PlsY.

The protein localises to the cytoplasm. It catalyses the reaction a fatty acyl-[ACP] + phosphate = an acyl phosphate + holo-[ACP]. Its pathway is lipid metabolism; phospholipid metabolism. In terms of biological role, catalyzes the reversible formation of acyl-phosphate (acyl-PO(4)) from acyl-[acyl-carrier-protein] (acyl-ACP). This enzyme utilizes acyl-ACP as fatty acyl donor, but not acyl-CoA. The protein is Phosphate acyltransferase of Ligilactobacillus salivarius (strain UCC118) (Lactobacillus salivarius).